A 458-amino-acid polypeptide reads, in one-letter code: MEFDTIAAISTALGEGAIAIVRVSGDDAVEKVNRIFKGKDLTEVPSHTIHYGHIVDLDTNQVIEEVMVSIMRAPRTFTRENIVEINCHGGLVSVNKVLQLILAQGVRLAEPGEFTKRAFLNGRIDLSQAEAVMDLIRAKTDRAMNVAINQMEGRLSKLIGRLRQDILETLAHVEVNIDYPEYDDVEEMTHNILIEKATHVRAEIAKILETSKQGKILREGIATAIIGRPNVGKSSLLNSLVQEKKAIVTDIAGTTRDVIEEYVNVRGVPLKLIDTAGIRETEDVVERIGVERSKEMMSQADLVLVVVNYSEALTNEDEDLFRAVQGKDFIVIVNKTDLPQAIDMERVIELAAGNRIITTSLIEEQGIDELETAIADLFFEGTIDSADVTYVSNARHIGLLTQAGKTIGDAIEAIENGVPIDMVQIDLTRTWEILGEITGDTVHESLIDQLFSQFCLGK.

Positions 22, 84, and 123 each coordinate (6S)-5-formyl-5,6,7,8-tetrahydrofolate. Positions 220 to 379 constitute a TrmE-type G domain; the sequence is GIATAIIGRP…LETAIADLFF (160 aa). Position 230 (Asn-230) interacts with K(+). Residues 230 to 235, 249 to 255, and 274 to 277 contribute to the GTP site; these read NVGKSS, TDIAGTT, and DTAG. Ser-234 serves as a coordination point for Mg(2+). 3 residues coordinate K(+): Thr-249, Ile-251, and Thr-254. Thr-255 is a binding site for Mg(2+). Lys-458 contacts (6S)-5-formyl-5,6,7,8-tetrahydrofolate.

This sequence belongs to the TRAFAC class TrmE-Era-EngA-EngB-Septin-like GTPase superfamily. TrmE GTPase family. As to quaternary structure, homodimer. Heterotetramer of two MnmE and two MnmG subunits. K(+) is required as a cofactor.

Its subcellular location is the cytoplasm. Its function is as follows. Exhibits a very high intrinsic GTPase hydrolysis rate. Involved in the addition of a carboxymethylaminomethyl (cmnm) group at the wobble position (U34) of certain tRNAs, forming tRNA-cmnm(5)s(2)U34. The sequence is that of tRNA modification GTPase MnmE from Bacillus cereus (strain ATCC 10987 / NRS 248).